A 179-amino-acid polypeptide reads, in one-letter code: Lebocin-1/2 (179 aa).

The signal sequence occupies residues 1–16 (MYKFLVFSSVLVLFFA). Positions 17 to 120 (QASCQRFIQP…QPIESHRNTR (104 aa)) are excised as a propeptide. A disordered region spans residues 93 to 116 (NNEASIEHSHHTVDTGLDQPIESH). O-linked (GalNAc...) threonine glycosylation occurs at Thr135. The propeptide occupies 153 to 179 (RRHASDDQEELRQYNEHFLIPRDIFQE).

Belongs to the lebocin family. Post-translationally, O-glycosylation is important for the antibacterial activity of lebocin, O-linked glycan structure is a disaccharide (Gal-GalNAc) in case of lebocin 1 and a monosaccharide (GalNAc) in case of lebocin 2. As to expression, hemolymph. Produced in fat body.

The protein resides in the secreted. Its function is as follows. Antibacterial peptide. The protein is Lebocin-1/2 of Bombyx mori (Silk moth).